The primary structure comprises 229 residues: 3-dehydroquinate dehydratase (229 aa).

Residues 29-31 (ELR) and R56 each bind 3-dehydroquinate. The Proton donor/acceptor role is filled by H120. K146 serves as the catalytic Schiff-base intermediate with substrate. 3 residues coordinate 3-dehydroquinate: R187, T208, and Q212.

The protein belongs to the type-I 3-dehydroquinase family. As to quaternary structure, homodimer.

It catalyses the reaction 3-dehydroquinate = 3-dehydroshikimate + H2O. The protein operates within metabolic intermediate biosynthesis; chorismate biosynthesis; chorismate from D-erythrose 4-phosphate and phosphoenolpyruvate: step 3/7. Involved in the third step of the chorismate pathway, which leads to the biosynthesis of aromatic amino acids. Catalyzes the cis-dehydration of 3-dehydroquinate (DHQ) and introduces the first double bond of the aromatic ring to yield 3-dehydroshikimate. The sequence is that of 3-dehydroquinate dehydratase from Haloarcula marismortui (strain ATCC 43049 / DSM 3752 / JCM 8966 / VKM B-1809) (Halobacterium marismortui).